Consider the following 302-residue polypeptide: AT-hook motif nuclear-localized protein 29 (302 aa).

A disordered region spans residues M1 to S95. The segment covering Q32–Q44 has biased composition (pro residues). The segment at residues K72–K84 is a DNA-binding region (a.T hook). The 146-residue stretch at P96–G241 folds into the PPC domain. The segment at G164–L169 is required for the binding to non-AHL interactors. A disordered region spans residues P229–Q279. Residues G237–G251 are compositionally biased toward gly residues.

Homodimer. Interacts with AHL5, AHL12, AHL25, AHL27, TCP4, TCP13 and EF114. In terms of tissue distribution, expressed in the hypocotyl and the vascular tissue of seedling.

It is found in the nucleus. Functionally, transcription factor that specifically binds AT-rich DNA sequences related to the nuclear matrix attachment regions (MARs). Acts redundantly with AHL18, AHL22 and AHL27 in the regulation of flowering and regulation of the hypocotyl elongation. Acts redundantly with AHL27/ESC to modulate hypocotyl growth inhibition in response to light. This is AT-hook motif nuclear-localized protein 29 from Arabidopsis thaliana (Mouse-ear cress).